The sequence spans 305 residues: 5'-hydroxyaverantin dehydrogenase stcG (305 aa).

Residues Ser25, Leu27, Gln48, Asp68, Tyr186, Lys190, and Ser221 each coordinate NADP(+). The active-site Proton acceptor is the Tyr186. Lys190 functions as the Lowers pKa of active site Tyr in the catalytic mechanism.

It belongs to the short-chain dehydrogenases/reductases (SDR) family.

The catalysed reaction is (1'S,5'S)-5'-hydroxyaverantin + NAD(+) = (S)-5'-oxoaverantin + NADH + H(+). The enzyme catalyses (1'S,5'R)-5'-hydroxyaverantin + NAD(+) = (S)-5'-oxoaverantin + NADH + 2 H(+). The protein operates within mycotoxin biosynthesis; sterigmatocystin biosynthesis. Functionally, 5'-hydroxyaverantin dehydrogenase; part of the gene cluster that mediates the biosynthesis of sterigmatocystin (ST), a polyketide-derived furanocoumarin which is part of the most toxic and carcinogenic compounds among the known mycotoxins. The first step in the biosynthesis of sterigmatocystin is the production of hexanoate by the fatty acid synthase (FAS) units stcJ and stcK. The polyketide backbone is assembled by the non-reducing polyketide synthase stcA by condensation of the starter hexanoyl-CoA and 7 malonyl-CoA extender units followed by cyclization and release of norsolorinic acid. Norsolorinic acid is the first stable intermediate in the biosynthesis of sterigmatocystin and is converted into averantin (AVN) by the ketoreductase stcE which reduces the hexanoate ketone to an alcohol. Averantin is then oxidized into 5'-hydroxyaverantin (HAVN) by the cytochrome P450 monooxygenase stcF. 5'-hydroxyaverantin is further converted to 5'-oxyaverantin (OAVN) by the 5'-hydroxyaverantin dehydrogenase stcG. The next step is the conversion of OAVN into averufin (AVF) which is catalyzed by a yet to be identified enzyme. The cytochrome P450 monooxygenase stcB and the flavin-binding monooxygenase stcW are both required for the conversion of averufin to 1-hydroxyversicolorone. The esterase stcI probably catalyzes the formation of versiconal hemiacetal acetate from 1-hydroxyversicolorone. The oxydoreductase stcN then probably catalyzes the biosynthetic step from versiconal to versicolorin B (VERB). The next step is performed by the versicolorin B desaturase stcL to produce versicolorin A (VERA). The ketoreductase stcU and the cytochrome P450 monooxygenase stcS are involved in the conversion of versicolorin A to demethylsterigmatocystin. The Baeyer-Villiger oxidas stcQ and the reductase stcR might be involved in the biosynthetic step from versicolorin A to demethylsterigmatocystin. The final step in the biosynthesis of sterigmatocystin is the methylation of demethylsterigmatocystin catalyzed by the methyltransferase stcP. In Emericella nidulans (strain FGSC A4 / ATCC 38163 / CBS 112.46 / NRRL 194 / M139) (Aspergillus nidulans), this protein is 5'-hydroxyaverantin dehydrogenase stcG.